The following is a 469-amino-acid chain: Calcium-binding mitochondrial carrier protein SCaMC-2-B (469 aa).

Residues 1–189 are Mitochondrial intermembrane-facing; that stretch reads MLCLCLYVPV…EKNTGMWWRH (189 aa). EF-hand domains follow at residues 47–80, 78–113, and 114–149; these read SYRK…RDHE, DHEK…LGVH, and ISEE…HPAE. Ca(2+) contacts are provided by D60, D62, D64, Q66, and E71. Solcar repeat units lie at residues 184–270, 278–363, and 375–463; these read GMWW…IKRL, LGIL…LKNS, and PGVF…LKIT. Residues 190 to 207 form a helical membrane-spanning segment; it reads LVAGGGAGAVSRTCTAPL. The Mitochondrial matrix portion of the chain corresponds to 208 to 244; that stretch reads DRLKVLMQVHATRSNSMGIAGGFTQMIREGGLRSLWR. A helical transmembrane segment spans residues 245-264; that stretch reads GNGINVLKIAPESAIKFMAY. Topologically, residues 265–287 are mitochondrial intermembrane; the sequence is EQIKRLIGSNQETLGILERLVSG. A helical transmembrane segment spans residues 288 to 301; sequence SLAGAIAQSSIYPM. At 302–337 the chain is on the mitochondrial matrix side; sequence EVLKTRLALGRTGQYSGIADCAKHIFKKEGMTAFYK. Residues 338-357 traverse the membrane as a helical segment; that stretch reads GYIPNMLGIIPYAGIDLAVY. The Mitochondrial intermembrane segment spans residues 358–380; sequence ETLKNSWLQRFATDSADPGVFVL. The chain crosses the membrane as a helical span at residues 381–398; that stretch reads LACGTMSSTCGQLASYPL. Topologically, residues 399 to 437 are mitochondrial matrix; it reads ALVRTRMQAQASQEGSPQMTMSGLFRHIVRTEGAIGLYR. A helical membrane pass occupies residues 438–457; sequence GLAPNFMKVIPAVSISYVVY. Over 458–469 the chain is Mitochondrial intermembrane; sequence ENLKITLGVQSR.

Belongs to the mitochondrial carrier (TC 2.A.29) family.

Its subcellular location is the mitochondrion inner membrane. Calcium-dependent mitochondrial solute carrier. This chain is Calcium-binding mitochondrial carrier protein SCaMC-2-B (slc25a25b), found in Danio rerio (Zebrafish).